A 425-amino-acid chain; its full sequence is 3-phosphoshikimate 1-carboxyvinyltransferase (425 aa).

3-phosphoshikimate is bound by residues lysine 23, serine 24, and arginine 28. Residue lysine 23 participates in phosphoenolpyruvate binding. Phosphoenolpyruvate contacts are provided by glycine 96 and arginine 124. Residues threonine 170, serine 171, glutamine 172, serine 198, aspartate 314, and lysine 341 each contribute to the 3-phosphoshikimate site. Glutamine 172 contributes to the phosphoenolpyruvate binding site. Aspartate 314 (proton acceptor) is an active-site residue. Residues arginine 345, arginine 386, and lysine 411 each coordinate phosphoenolpyruvate.

It belongs to the EPSP synthase family. In terms of assembly, monomer.

The protein resides in the cytoplasm. It carries out the reaction 3-phosphoshikimate + phosphoenolpyruvate = 5-O-(1-carboxyvinyl)-3-phosphoshikimate + phosphate. The protein operates within metabolic intermediate biosynthesis; chorismate biosynthesis; chorismate from D-erythrose 4-phosphate and phosphoenolpyruvate: step 6/7. Its function is as follows. Catalyzes the transfer of the enolpyruvyl moiety of phosphoenolpyruvate (PEP) to the 5-hydroxyl of shikimate-3-phosphate (S3P) to produce enolpyruvyl shikimate-3-phosphate and inorganic phosphate. This Nostoc sp. (strain PCC 7120 / SAG 25.82 / UTEX 2576) protein is 3-phosphoshikimate 1-carboxyvinyltransferase.